We begin with the raw amino-acid sequence, 327 residues long: GTPase Obg (327 aa).

One can recognise an Obg domain in the interval 3-160 (NKFTDFIKIY…FIFVLELKIL (158 aa)). The OBG-type G domain maps to 161 to 327 (ADVGLIGLPN…LIYYICNILS (167 aa)). GTP contacts are provided by residues 167-174 (GLPNSGKS), 192-196 (FTTLN), 214-217 (DIPG), 281-284 (SKSD), and 308-310 (SSF). Mg(2+)-binding residues include Ser-174 and Thr-194.

The protein belongs to the TRAFAC class OBG-HflX-like GTPase superfamily. OBG GTPase family. In terms of assembly, monomer. It depends on Mg(2+) as a cofactor.

It is found in the cytoplasm. In terms of biological role, an essential GTPase which binds GTP, GDP and possibly (p)ppGpp with moderate affinity, with high nucleotide exchange rates and a fairly low GTP hydrolysis rate. Plays a role in control of the cell cycle, stress response, ribosome biogenesis and in those bacteria that undergo differentiation, in morphogenesis control. The chain is GTPase Obg from Karelsulcia muelleri (strain GWSS) (Sulcia muelleri).